Here is a 208-residue protein sequence, read N- to C-terminus: Protein-methionine-sulfoxide reductase heme-binding subunit MsrQ (208 aa).

6 consecutive transmembrane segments (helical) span residues I16–G36, W53–W73, M82–D102, T118–T138, L156–L176, and E178–V198.

It belongs to the MsrQ family. Heterodimer of a catalytic subunit (MsrP) and a heme-binding subunit (MsrQ). Requires FMN as cofactor. Heme b serves as cofactor.

The protein resides in the cell inner membrane. Functionally, part of the MsrPQ system that repairs oxidized periplasmic proteins containing methionine sulfoxide residues (Met-O), using respiratory chain electrons. Thus protects these proteins from oxidative-stress damage caused by reactive species of oxygen and chlorine generated by the host defense mechanisms. MsrPQ is essential for the maintenance of envelope integrity under bleach stress, rescuing a wide series of structurally unrelated periplasmic proteins from methionine oxidation. MsrQ provides electrons for reduction to the reductase catalytic subunit MsrP, using the quinone pool of the respiratory chain. The protein is Protein-methionine-sulfoxide reductase heme-binding subunit MsrQ of Rhodospirillum rubrum (strain ATCC 11170 / ATH 1.1.1 / DSM 467 / LMG 4362 / NCIMB 8255 / S1).